A 750-amino-acid polypeptide reads, in one-letter code: Photosystem I P700 chlorophyll a apoprotein A1 (750 aa).

Helical transmembrane passes span Val70–Ala93, Leu156–His179, Leu195–Leu219, Ile291–Tyr309, Trp346–Tyr369, Leu385–Val411, Ala433–His455, and Phe531–Leu549. Residues Cys573 and Cys582 each coordinate [4Fe-4S] cluster. The next 2 helical transmembrane spans lie at His589–Trp610 and Leu664–Phe686. Position 675 (His675) interacts with chlorophyll a'. Residues Met683 and Tyr691 each contribute to the chlorophyll a site. Trp692 serves as a coordination point for phylloquinone. A helical transmembrane segment spans residues Ala724 to Ala744.

The protein belongs to the PsaA/PsaB family. The PsaA/B heterodimer binds the P700 chlorophyll special pair and subsequent electron acceptors. PSI consists of a core antenna complex that captures photons, and an electron transfer chain that converts photonic excitation into a charge separation. The eukaryotic PSI reaction center is composed of at least 11 subunits. P700 is a chlorophyll a/chlorophyll a' dimer, A0 is one or more chlorophyll a, A1 is one or both phylloquinones and FX is a shared 4Fe-4S iron-sulfur center. serves as cofactor.

The protein resides in the plastid. It is found in the chloroplast thylakoid membrane. It carries out the reaction reduced [plastocyanin] + hnu + oxidized [2Fe-2S]-[ferredoxin] = oxidized [plastocyanin] + reduced [2Fe-2S]-[ferredoxin]. Functionally, psaA and PsaB bind P700, the primary electron donor of photosystem I (PSI), as well as the electron acceptors A0, A1 and FX. PSI is a plastocyanin-ferredoxin oxidoreductase, converting photonic excitation into a charge separation, which transfers an electron from the donor P700 chlorophyll pair to the spectroscopically characterized acceptors A0, A1, FX, FA and FB in turn. Oxidized P700 is reduced on the lumenal side of the thylakoid membrane by plastocyanin. This chain is Photosystem I P700 chlorophyll a apoprotein A1, found in Liriodendron tulipifera (Tuliptree).